The sequence spans 879 residues: Phosphoenolpyruvate carboxylase (879 aa).

Residues histidine 138 and lysine 546 contribute to the active site.

This sequence belongs to the PEPCase type 1 family. Requires Mg(2+) as cofactor.

It catalyses the reaction oxaloacetate + phosphate = phosphoenolpyruvate + hydrogencarbonate. Its function is as follows. Forms oxaloacetate, a four-carbon dicarboxylic acid source for the tricarboxylic acid cycle. The chain is Phosphoenolpyruvate carboxylase from Pectobacterium carotovorum subsp. carotovorum (strain PC1).